The primary structure comprises 604 residues: Putative ankyrin repeat protein L56 (604 aa).

13 ANK repeats span residues 77 to 106 (IDRY…DILV), 135 to 164 (FFKS…NADG), 166 to 189 (LSAC…YDDN), 190 to 219 (TIYH…EDKR), 221 to 247 (NVFI…KWKI), 248 to 277 (DVEF…DSKY), 314 to 341 (KFSK…NENV), 342 to 371 (DLRE…EFTD), 380 to 410 (EHIT…SRSY), 445 to 474 (YSQA…DIKP), 475 to 504 (ITNI…DITI), 505 to 534 (NDNR…DIRT), and 535 to 565 (DDDY…EPSN).

In Acanthamoeba polyphaga (Amoeba), this protein is Putative ankyrin repeat protein L56.